Consider the following 261-residue polypeptide: Putative [LysW]-aminoadipate/[LysW]-glutamate kinase (261 aa).

Substrate-binding positions include 35–36 (GG), arginine 62, and asparagine 162.

The protein belongs to the acetylglutamate kinase family. LysZ subfamily.

The protein resides in the cytoplasm. The catalysed reaction is [amino-group carrier protein]-C-terminal-N-(1,4-dicarboxybutan-1-yl)-L-glutamine + ATP = [amino-group carrier protein]-C-terminal-N-(1-carboxy-5-phosphooxy-5-oxopentan-1-yl)-L-glutamine + ADP. It carries out the reaction [amino-group carrier protein]-C-terminal-gamma-(L-glutamyl)-L-glutamate + ATP = [amino-group carrier protein]-C-terminal-gamma-(5-phospho-L-glutamyl)-L-glutamate + ADP. It participates in amino-acid biosynthesis; L-lysine biosynthesis via AAA pathway; L-lysine from L-alpha-aminoadipate (Thermus route): step 2/5. Its pathway is amino-acid biosynthesis; L-arginine biosynthesis. Its function is as follows. Involved in both the arginine and lysine biosynthetic pathways. Phosphorylates the LysW-bound precursors glutamate (for arginine biosynthesis), respectively alpha-aminoadipate (for lysine biosynthesis). This is Putative [LysW]-aminoadipate/[LysW]-glutamate kinase from Pyrobaculum islandicum (strain DSM 4184 / JCM 9189 / GEO3).